Reading from the N-terminus, the 65-residue chain is Large ribosomal subunit protein bL35 (65 aa).

Positions 1 to 16 (MPKQKTHRASAKRFKR) are enriched in basic residues. The disordered stretch occupies residues 1-21 (MPKQKTHRASAKRFKRTGSGG).

The protein belongs to the bacterial ribosomal protein bL35 family.

In Streptococcus pyogenes serotype M18 (strain MGAS8232), this protein is Large ribosomal subunit protein bL35.